A 521-amino-acid polypeptide reads, in one-letter code: GMP synthase [glutamine-hydrolyzing] (521 aa).

The region spanning 8 to 203 (KILILDFGAQ…VVDVCGCQTL (196 aa)) is the Glutamine amidotransferase type-1 domain. Cys85 functions as the Nucleophile in the catalytic mechanism. Catalysis depends on residues His177 and Glu179. One can recognise a GMPS ATP-PPase domain in the interval 204 to 396 (WTAANIIEDQ…LGLPRTMVYR (193 aa)). Residue 231–237 (SGGVDSS) coordinates ATP.

As to quaternary structure, homodimer.

The catalysed reaction is XMP + L-glutamine + ATP + H2O = GMP + L-glutamate + AMP + diphosphate + 2 H(+). Its pathway is purine metabolism; GMP biosynthesis; GMP from XMP (L-Gln route): step 1/1. Its function is as follows. Catalyzes the synthesis of GMP from XMP. This is GMP synthase [glutamine-hydrolyzing] from Xanthomonas axonopodis pv. citri (strain 306).